The sequence spans 293 residues: Elongation factor Ts (293 aa).

The involved in Mg(2+) ion dislocation from EF-Tu stretch occupies residues 80-83 (TDFV).

The protein belongs to the EF-Ts family.

The protein resides in the cytoplasm. Its function is as follows. Associates with the EF-Tu.GDP complex and induces the exchange of GDP to GTP. It remains bound to the aminoacyl-tRNA.EF-Tu.GTP complex up to the GTP hydrolysis stage on the ribosome. The sequence is that of Elongation factor Ts from Aeromonas hydrophila subsp. hydrophila (strain ATCC 7966 / DSM 30187 / BCRC 13018 / CCUG 14551 / JCM 1027 / KCTC 2358 / NCIMB 9240 / NCTC 8049).